The chain runs to 105 residues: Putative zinc finger protein 861 (105 aa).

The C2H2-type zinc-finger motif lies at 75 to 97; the sequence is YTCKPCGNAFRFHHSFHIHERPH.

The sequence is that of Putative zinc finger protein 861 (ZNF861P) from Homo sapiens (Human).